The primary structure comprises 422 residues: Dihydrolipoyllysine-residue succinyltransferase component of 2-oxoglutarate dehydrogenase complex (422 aa).

Positions 1 to 76 constitute a Lipoyl-binding domain; sequence MPEVKVPELA…EVGQAIAIIG (76 aa). Lysine 42 bears the N6-lipoyllysine mark. Positions 77–184 are disordered; that stretch reads EGSGNASKEN…APAKEEKKYN (108 aa). 2 stretches are compositionally biased toward polar residues: residues 80–94 and 116–130; these read GNAS…TPQQ and NQAN…NATP. The Peripheral subunit-binding (PSBD) domain maps to 127–163; it reads NATPSARRYARENGVNLAEVSPKTNDVVRKEDIDKKQ. The segment covering 152–163 has biased composition (basic and acidic residues); sequence DVVRKEDIDKKQ. Over residues 164–176 the composition is skewed to low complexity; it reads QAPASTQTTQQAP. Catalysis depends on residues histidine 393 and aspartate 397.

Belongs to the 2-oxoacid dehydrogenase family. As to quaternary structure, forms a 24-polypeptide structural core with octahedral symmetry. Part of the 2-oxoglutarate dehydrogenase (OGDH) complex composed of E1 (2-oxoglutarate dehydrogenase), E2 (dihydrolipoamide succinyltransferase) and E3 (dihydrolipoamide dehydrogenase); the complex contains multiple copies of the three enzymatic components (E1, E2 and E3). The cofactor is (R)-lipoate.

It catalyses the reaction N(6)-[(R)-dihydrolipoyl]-L-lysyl-[protein] + succinyl-CoA = N(6)-[(R)-S(8)-succinyldihydrolipoyl]-L-lysyl-[protein] + CoA. Its pathway is amino-acid degradation; L-lysine degradation via saccharopine pathway; glutaryl-CoA from L-lysine: step 6/6. Functionally, E2 component of the 2-oxoglutarate dehydrogenase (OGDH) complex which catalyzes the second step in the conversion of 2-oxoglutarate to succinyl-CoA and CO(2). This chain is Dihydrolipoyllysine-residue succinyltransferase component of 2-oxoglutarate dehydrogenase complex (odhB), found in Staphylococcus aureus (strain Mu50 / ATCC 700699).